The following is a 449-amino-acid chain: Serine--tRNA ligase (449 aa).

255-257 (TSE) contacts L-serine. Position 286 to 288 (286 to 288 (RSE)) interacts with ATP. Residue Glu-309 coordinates L-serine. Residue 373 to 376 (EISS) participates in ATP binding. Ser-409 is a binding site for L-serine.

Belongs to the class-II aminoacyl-tRNA synthetase family. Type-1 seryl-tRNA synthetase subfamily. As to quaternary structure, homodimer. The tRNA molecule binds across the dimer.

The protein resides in the cytoplasm. It catalyses the reaction tRNA(Ser) + L-serine + ATP = L-seryl-tRNA(Ser) + AMP + diphosphate + H(+). The catalysed reaction is tRNA(Sec) + L-serine + ATP = L-seryl-tRNA(Sec) + AMP + diphosphate + H(+). It participates in aminoacyl-tRNA biosynthesis; selenocysteinyl-tRNA(Sec) biosynthesis; L-seryl-tRNA(Sec) from L-serine and tRNA(Sec): step 1/1. Functionally, catalyzes the attachment of serine to tRNA(Ser). Is also able to aminoacylate tRNA(Sec) with serine, to form the misacylated tRNA L-seryl-tRNA(Sec), which will be further converted into selenocysteinyl-tRNA(Sec). This chain is Serine--tRNA ligase, found in Bordetella avium (strain 197N).